The sequence spans 170 residues: Peptide deformylase (170 aa).

Fe cation-binding residues include C91 and H133. The active site involves E134. H137 contacts Fe cation.

It belongs to the polypeptide deformylase family. The cofactor is Fe(2+).

The enzyme catalyses N-terminal N-formyl-L-methionyl-[peptide] + H2O = N-terminal L-methionyl-[peptide] + formate. Functionally, removes the formyl group from the N-terminal Met of newly synthesized proteins. Requires at least a dipeptide for an efficient rate of reaction. N-terminal L-methionine is a prerequisite for activity but the enzyme has broad specificity at other positions. The sequence is that of Peptide deformylase from Aeromonas salmonicida (strain A449).